The following is a 386-amino-acid chain: Patatin-B1 (386 aa).

An N-terminal signal peptide occupies residues 1-23 (MATTKSFLILFFMILATTSSTCA). Residues 32–229 (LSIDGGGIKG…TVGDPALLSL (198 aa)) form the PNPLA domain. Positions 36–41 (GGGIKG) match the GXGXXG motif. Positions 75-79 (GTSTG) match the GXSXG motif. Serine 77 acts as the Nucleophile in catalysis. An N-linked (GlcNAc...) asparagine glycan is attached at asparagine 115. The Proton acceptor role is filled by aspartate 215. Residues 215-217 (DGG) carry the DGA/G motif.

The protein belongs to the patatin family.

It is found in the vacuole. In terms of biological role, probable lipolytic acyl hydrolase (LAH), an activity which is thought to be involved in the response of tubers to pathogens. This is Patatin-B1 (PATB1) from Solanum tuberosum (Potato).